The chain runs to 438 residues: Adenosylhomocysteinase (438 aa).

Substrate contacts are provided by threonine 64, aspartate 139, and glutamate 164. 165–167 provides a ligand contact to NAD(+); sequence TTT. Positions 194 and 198 each coordinate substrate. NAD(+) is bound by residues asparagine 199, 228 to 233, glutamate 251, asparagine 286, 307 to 309, and asparagine 352; these read GYGDVG and IGH.

It belongs to the adenosylhomocysteinase family. NAD(+) is required as a cofactor.

The protein localises to the cytoplasm. The catalysed reaction is S-adenosyl-L-homocysteine + H2O = L-homocysteine + adenosine. It participates in amino-acid biosynthesis; L-homocysteine biosynthesis; L-homocysteine from S-adenosyl-L-homocysteine: step 1/1. May play a key role in the regulation of the intracellular concentration of adenosylhomocysteine. The chain is Adenosylhomocysteinase from Coxiella burnetii (strain Dugway 5J108-111).